A 425-amino-acid polypeptide reads, in one-letter code: Serine--tRNA ligase (425 aa).

235–237 (TAE) contributes to the L-serine binding site. 266 to 268 (RSE) contributes to the ATP binding site. Residue Glu289 participates in L-serine binding. ATP is bound at residue 353–356 (EISS). Ser389 contributes to the L-serine binding site.

The protein belongs to the class-II aminoacyl-tRNA synthetase family. Type-1 seryl-tRNA synthetase subfamily. Homodimer. The tRNA molecule binds across the dimer.

The protein localises to the cytoplasm. The enzyme catalyses tRNA(Ser) + L-serine + ATP = L-seryl-tRNA(Ser) + AMP + diphosphate + H(+). It catalyses the reaction tRNA(Sec) + L-serine + ATP = L-seryl-tRNA(Sec) + AMP + diphosphate + H(+). It participates in aminoacyl-tRNA biosynthesis; selenocysteinyl-tRNA(Sec) biosynthesis; L-seryl-tRNA(Sec) from L-serine and tRNA(Sec): step 1/1. Its function is as follows. Catalyzes the attachment of serine to tRNA(Ser). Is also able to aminoacylate tRNA(Sec) with serine, to form the misacylated tRNA L-seryl-tRNA(Sec), which will be further converted into selenocysteinyl-tRNA(Sec). The sequence is that of Serine--tRNA ligase from Desulfotalea psychrophila (strain LSv54 / DSM 12343).